The following is a 563-amino-acid chain: Probable trehalase (563 aa).

Substrate-binding positions include Arg-154, 161–162, Asn-198, 207–209, 274–276, and Gly-307; these read WD, RSQ, and RPE. Residues Asp-309 and Glu-517 each act as proton donor/acceptor in the active site. Glu-532 is a binding site for substrate.

The protein belongs to the glycosyl hydrolase 37 family.

It carries out the reaction alpha,alpha-trehalose + H2O = alpha-D-glucose + beta-D-glucose. In terms of biological role, involved in the regulation of trehalose content by hydrolyzing trehalose to glucose. This Oryza sativa subsp. japonica (Rice) protein is Probable trehalase.